Here is a 366-residue protein sequence, read N- to C-terminus: Ribonuclease P protein subunit drpp30 (366 aa).

The tract at residues Glu-265–Glu-366 is disordered. Basic and acidic residues predominate over residues Pro-275–Ile-290. 2 stretches are compositionally biased toward low complexity: residues Pro-291 to Ile-324 and Thr-333 to Gln-351. A compositionally biased stretch (basic and acidic residues) spans Gly-352–Glu-366.

Belongs to the eukaryotic/archaeal RNase P protein component 3 family.

It is found in the nucleus. It catalyses the reaction Endonucleolytic cleavage of RNA, removing 5'-extranucleotides from tRNA precursor.. Functionally, component of ribonuclease P, a protein complex that generates mature tRNA molecules by cleaving their 5'-ends. This Dictyostelium discoideum (Social amoeba) protein is Ribonuclease P protein subunit drpp30 (drpp30).